The following is a 526-amino-acid chain: Reelin domain-containing protein 1 (526 aa).

The signal sequence occupies residues 1 to 23 (MRMQAALVGWACTTLCLASCSSA). The Reelin domain occupies 24 to 179 (FSHGASTVAC…SAHSDDRMEP (156 aa)). Residues 24–443 (FSHGASTVAC…PLGIQLRTPQ (420 aa)) lie on the Extracellular side of the membrane. 3 disordered regions span residues 242 to 272 (DAETLSQPSSHTATEGSINQQPSGDSNPTLE), 294 to 336 (FASS…TVTQ), and 370 to 398 (LQTSGTSGLPAAGDQSEASRASASFLPQS). The span at 245–271 (TLSQPSSHTATEGSINQQPSGDSNPTL) shows a compositional bias: polar residues. Over residues 385–396 (SEASRASASFLP) the composition is skewed to polar residues. The chain crosses the membrane as a helical span at residues 444–462 (LGILLCLSATLGMALAAGL). Residues 463–526 (RYLHTQYCHQ…PSVGSKKTVL (64 aa)) are Cytoplasmic-facing.

Its subcellular location is the membrane. The protein is Reelin domain-containing protein 1 of Homo sapiens (Human).